Here is a 210-residue protein sequence, read N- to C-terminus: Probable peroxygenase 7 (210 aa).

The disordered stretch occupies residues 1-24 (MSHQTVALASKAKSPKPKRGKLDK). The EF-hand domain maps to 25-60 (EKMTALEKHVSFFDRNKDGTVYPWETYQGFRALGTG). His-33 is a binding site for heme. 5 residues coordinate Ca(2+): Asp-38, Asn-40, Asp-42, Thr-44, and Glu-49. Positions 81–90 (PGKGFSPLFP) match the Proline-knot motif. A Phosphoserine modification is found at Ser-188.

It belongs to the caleosin family. As to quaternary structure, homodimer. Heme b is required as a cofactor. Ca(2+) serves as cofactor. In terms of tissue distribution, expressed in pollen coat.

It localises to the secreted. The catalysed reaction is RH + ROOH = ROH + ROH.. In terms of biological role, probable calcium-binding peroxygenase. May be involved in pollination. This is Probable peroxygenase 7 (PXG7) from Arabidopsis thaliana (Mouse-ear cress).